We begin with the raw amino-acid sequence, 797 residues long: Kinesin-like protein KIF18B (797 aa).

Residues 11–352 form the Kinesin motor domain; that stretch reads TVAVVVRVRP…LKYANRAKEI (342 aa). 110 to 117 is a binding site for ATP; sequence GATGAGKT. Residues 367–402 adopt a coiled-coil conformation; it reads ISKYATICEQLKTEVADLQAKLRAYEDAARDAGKQI. Disordered stretches follow at residues 412–476, 528–564, 579–640, and 730–797; these read EEAV…PNRL, AAVSPQPTDTSGAPPALRTQRGCDASPSTLSAEPSVP, LSSP…KEPQ, and KGSS…SGPR. Positions 594–608 are enriched in polar residues; that stretch reads MSNTSRLETPHSLNT. Over residues 731 to 744 the composition is skewed to low complexity; sequence GSSIPKPSSISKGS.

The protein belongs to the TRAFAC class myosin-kinesin ATPase superfamily. Kinesin family.

The protein localises to the nucleus. The protein resides in the cytoplasm. It is found in the cytoskeleton. May play an important role in microtubule plus-end depolymerizing activity in mitotic cells. This is Kinesin-like protein KIF18B (KIF18B) from Gallus gallus (Chicken).